Reading from the N-terminus, the 159-residue chain is Probable E3 ubiquitin-protein ligase RHA1A (159 aa).

The RING-type; atypical zinc-finger motif lies at 86-130; the sequence is CTVCLSDFESDDKVRQLPKCGHVFHHYCLDRWIVDYNKMKCPVCR.

In terms of tissue distribution, predominantly expressed in stems.

The enzyme catalyses S-ubiquitinyl-[E2 ubiquitin-conjugating enzyme]-L-cysteine + [acceptor protein]-L-lysine = [E2 ubiquitin-conjugating enzyme]-L-cysteine + N(6)-ubiquitinyl-[acceptor protein]-L-lysine.. The protein operates within protein modification; protein ubiquitination. Probable E3 ubiquitin-protein ligase that may possess E3 ubiquitin ligase activity in vitro. The chain is Probable E3 ubiquitin-protein ligase RHA1A from Arabidopsis thaliana (Mouse-ear cress).